Reading from the N-terminus, the 411-residue chain is Multidrug resistance protein MdtG (411 aa).

Helical transmembrane passes span 17 to 37 (LFVA…VMPF), 59 to 79 (LVFS…GGLA), 92 to 112 (ALGM…WQFL), 116 to 136 (AVLG…ATQV), 147 to 167 (WLST…GLLA), 174 to 194 (PVFF…LFAV), 222 to 242 (VLTL…IAPI), 257 to 277 (LAFV…ISAP), 291 to 311 (ILVA…MVQN), 320 to 340 (FLLG…LIYN), and 379 to 399 (AVFV…WITL).

It belongs to the major facilitator superfamily. DHA1 family. MdtG (TC 2.A.1.2.20) subfamily.

It is found in the cell inner membrane. The protein is Multidrug resistance protein MdtG of Erwinia billingiae (strain Eb661).